The following is a 507-amino-acid chain: Arabinose import ATP-binding protein AraG (507 aa).

ABC transporter domains lie at 8 to 243 (LSFH…MVGR) and 255 to 499 (PHGE…MLRI). 40 to 47 (GENGAGKS) is a binding site for ATP.

Belongs to the ABC transporter superfamily. Arabinose importer (TC 3.A.1.2.2) family. As to quaternary structure, the complex is composed of two ATP-binding proteins (AraG), two transmembrane proteins (AraH) and a solute-binding protein (AraF).

Its subcellular location is the cell inner membrane. It catalyses the reaction L-arabinose(out) + ATP + H2O = L-arabinose(in) + ADP + phosphate + H(+). Its function is as follows. Part of the ABC transporter complex AraFGH involved in arabinose import. Responsible for energy coupling to the transport system. The chain is Arabinose import ATP-binding protein AraG from Pectobacterium atrosepticum (strain SCRI 1043 / ATCC BAA-672) (Erwinia carotovora subsp. atroseptica).